The sequence spans 115 residues: U3-lycotoxin-Ls1s (115 aa).

The N-terminal stretch at 1-20 (MKFVLLFGVFLLTLFSYSSS) is a signal peptide. The propeptide occupies 21–44 (EMLDDFDQADEDELLSLIEKEEAR). Intrachain disulfides connect cysteine 48–cysteine 63, cysteine 55–cysteine 72, cysteine 62–cysteine 87, and cysteine 74–cysteine 85.

The protein belongs to the neurotoxin 19 (CSTX) family. 01 subfamily. In terms of tissue distribution, expressed by the venom gland.

The protein resides in the secreted. The sequence is that of U3-lycotoxin-Ls1s from Lycosa singoriensis (Wolf spider).